The sequence spans 478 residues: Transcriptional regulator Erg (478 aa).

The span at 34–47 (TASSSSEYGQTSKM) shows a compositional bias: polar residues. Disordered regions lie at residues 34–56 (TASS…QQDW) and 73–93 (NQVN…GGKM). A PNT domain is found at 113–199 (IPPPNMTTNE…SHLHYLRETP (87 aa)). Positions 242–303 (QRITTRPDLP…ILGPTSSRLA (62 aa)) are disordered. Polar residues predominate over residues 259 to 280 (AWTSHSHPTQSKATQPSSSTVP). The ETS DNA-binding region spans 310-390 (IQLWQFLLEL…HGKRYAYKFD (81 aa)).

This sequence belongs to the ETS family. Expressed in mesoderm- and, to a lesser extent, in ectoderm-derived tissues.

The protein resides in the nucleus. In terms of biological role, acts as a transcriptional activator. The chain is Transcriptional regulator Erg (ERG) from Gallus gallus (Chicken).